The primary structure comprises 212 residues: Ribosomal RNA small subunit methyltransferase G (212 aa).

S-adenosyl-L-methionine contacts are provided by residues Gly80, Leu85, Ala131–Glu132, and Arg146.

It belongs to the methyltransferase superfamily. RNA methyltransferase RsmG family.

It localises to the cytoplasm. It catalyses the reaction guanosine(527) in 16S rRNA + S-adenosyl-L-methionine = N(7)-methylguanosine(527) in 16S rRNA + S-adenosyl-L-homocysteine. Its function is as follows. Specifically methylates the N7 position of guanine in position 527 of 16S rRNA. The polypeptide is Ribosomal RNA small subunit methyltransferase G (Xylella fastidiosa (strain 9a5c)).